Consider the following 462-residue polypeptide: Microspherule protein 1 (462 aa).

The residue at position 1 (methionine 1) is an N-acetylmethionine. Positions 1-130 (MDKDSQGLLD…KSKQPLQVTK (130 aa)) are disordered. Serine 22 carries the phosphoserine modification. A compositionally biased stretch (basic residues) spans 43–55 (PKRRSSSRFIKRK). A Phosphoserine modification is found at serine 102. The residue at position 103 (threonine 103) is a Phosphothreonine. The span at 103-112 (TPVPPSPAPA) shows a compositional bias: pro residues. Residue serine 108 is modified to Phosphoserine. Residues 113-123 (PGLTKRVKKSK) carry the Nuclear localization signal motif. 2 positions are modified to N6-acetyllysine: lysine 123 and lysine 130. Residue serine 282 is modified to Phosphoserine. A coiled-coil region spans residues 301–335 (LEHELMVADRRQKREIRQLEQELHKWQVLVDSITG). Residues 363 to 419 (ITLGRATKDNQIDVDLSLEGPAWKISRKQGVIKLKNNGDFFIANEGRRPIYIDGRPV) enclose the FHA domain. Positions 389–396 (RKQGVIKL) match the UBR5-degron motif.

Component of the chromatin remodeling INO80 complex; specifically part of a complex module associated with the N-terminus of INO80. Component of some MLL1/MLL complex, at least composed of the core components KMT2A/MLL1, ASH2L, HCFC1, WDR5 and RBBP5, as well as the facultative components BACC1, CHD8, E2F6, HSP70, INO80C, KANSL1, LAS1L, MAX, MCRS1, MGA, KAT8/MOF, PELP1, PHF20, PRP31, RING2, RUVB1/TIP49A, RUVB2/TIP49B, SENP3, TAF1, TAF4, TAF6, TAF7, TAF9 and TEX10. Component of the NSL complex at least composed of MOF/KAT8, KANSL1, KANSL2, KANSL3, MCRS1, PHF20, OGT1/OGT, WDR5 and HCFC1. Interacts with NOP2. Interacts with PINX1. Interacts with TERT. Interacts with CCDC85B. Interacts with DAXX. Interacts (via N-terminus) with FMR1 (via phosphorylated form). Interacts with FXR1 and FXR2. Interacts (via C-terminus) with NDE1 (via C-terminus); phosphorylation of NDE1 inhibits the interaction. Interacts (via C-terminus) with ZNF375. Interacts (via C-terminus) with active GTP-bound RHEB (via N-terminus) under conditions of high amino acid concentration; the interaction promotes mTORC1 complex activation by RHEB. Interacts (via N-terminus) with the mTORC1 complex; the interaction ensures mTORC1 activation by RHEB. Interacts with DYNC1I1; the interaction is required for the proper distribution of centriolar satellites. Interacts with TTBK2; the interaction is required for recruitment of TTBK2 to the mother centriole. Interacts with KIF2A; the interaction occurs during mitosis and facilitates chromosome alignment. In terms of assembly, (Microbial infection) Interacts with Herpes simplex virus ICP22. Post-translationally, ubiquitinated by UBR5 when not assembled in the INO80 complex, leading to its degradation: UBR5 recognizes and binds a degron that is not accessible when MCRS1 is part of the INO80 complex. In terms of processing, phosphorylated by AURKA on Ser-35 and/or Ser-36 during mitosis which is required for kinetochore fiber assembly and mitotic progression but not for spindle localization or for chromosome-induced microtuble aster formation. Also phosphorylated by AURKA on Ser-85 and/or Ser-87. Phosphorylated by TTK/MPS1 which enhances recruitment of KIF2A to the minus end of spindle microtubules and facilitates precise chromosome segregation. In terms of tissue distribution, detected in testis, and at lower levels in spleen, thymus, prostate, uterus, small intestine, colon and leukocytes.

The protein localises to the nucleus. Its subcellular location is the nucleolus. It localises to the cytoplasm. The protein resides in the cytoskeleton. It is found in the microtubule organizing center. The protein localises to the centrosome. Its subcellular location is the spindle pole. It localises to the chromosome. The protein resides in the centromere. It is found in the kinetochore. The protein localises to the lysosome. Its subcellular location is the centriolar satellite. Functionally, modulates the transcription repressor activity of DAXX by recruiting it to the nucleolus. As part of the NSL complex, may be involved in acetylation of nucleosomal histone H4 on several lysine residues. Putative regulatory component of the chromatin remodeling INO80 complex which is involved in transcriptional regulation, DNA replication and probably DNA repair. May also be an inhibitor of TERT telomerase activity. Binds to G-quadruplex structures in mRNA. Binds to RNA homomer poly(G) and poly(U). Maintains RHEB at the lysosome in its active GTP-bound form and prevents its interaction with the mTORC1 complex inhibitor TSC2, ensuring activation of the mTORC1 complex by RHEB. Stabilizes the minus ends of kinetochore fibers by protecting them from depolymerization, ensuring functional spindle assembly during mitosis. Following phosphorylation by TTK/MPS1, enhances recruitment of KIF2A to the minus ends of mitotic spindle microtubules which promotes chromosome alignment. Regulates the morphology of microtubule minus ends in mitotic spindle by maintaining them in a closed conformation characterized by the presence of an electron-dense cap. Regulates G2/M transition and spindle assembly during oocyte meiosis. Mediates histone modifications and transcriptional regulation in germinal vesicle oocytes which are required for meiotic progression. Also regulates microtubule nucleation and spindle assembly by activating aurora kinases during oocyte meiosis. Contributes to the establishment of centriolar satellites and also plays a role in primary cilium formation by recruiting TTBK2 to the mother centriole which is necessary for removal of the CP110 cap from the mother centriole, an early step in ciliogenesis. Required for epiblast development during early embryogenesis. Essential for cell viability. This chain is Microspherule protein 1 (MCRS1), found in Homo sapiens (Human).